The sequence spans 274 residues: Halorhodopsin (274 aa).

Positions 1-21 are excised as a propeptide; the sequence is MSITSVPGVVDAGVLGAQSAA. Over 22 to 25 the chain is Extracellular; sequence AVRE. A helical membrane pass occupies residues 26–51; the sequence is NALLSSSLWVNVALAGIAILVFVYMG. The Cytoplasmic portion of the chain corresponds to 52 to 57; the sequence is RTIRPG. Residues 58–81 form a helical membrane-spanning segment; that stretch reads RPRLIWGATLMIPLVSISSYLGLL. Residues 82–105 lie on the Extracellular side of the membrane; it reads SGLTVGMIEMPAGHALAGEMVRSQ. Residues Gln-105, Thr-111, and Ser-115 each contribute to the chloride site. The helical transmembrane segment at 106–127 threads the bilayer; sequence WGRYLTWALSTPMILLALGLLA. Topologically, residues 128-130 are cytoplasmic; the sequence is DVD. Residues 131–154 traverse the membrane as a helical segment; sequence LGSLFTVIAADIGMCVTGLAAAMT. The Extracellular portion of the chain corresponds to 155–157; the sequence is TSA. The helical transmembrane segment at 158 to 180 threads the bilayer; it reads LLFRWAFYAISCAFFVVVLSALV. The Cytoplasmic portion of the chain corresponds to 181 to 192; it reads TDWAASASSAGT. The helical transmembrane segment at 193 to 216 threads the bilayer; it reads AEIFDTLRVLTVVLWLGYPIVWAV. Over 217-226 the chain is Extracellular; it reads GVEGLALVQS. A helical transmembrane segment spans residues 227-255; sequence VGVTSWAYSVLDVFAKYVFAFILLRWVAN. Lys-242 bears the N6-(retinylidene)lysine mark. Residues 256–274 lie on the Cytoplasmic side of the membrane; that stretch reads NERTVAVAGQTLGTMSSDD.

This sequence belongs to the archaeal/bacterial/fungal opsin family. Homotrimer.

Its subcellular location is the cell membrane. Light-driven chloride pump. This chain is Halorhodopsin (hop), found in Halobacterium salinarum (strain ATCC 29341 / DSM 671 / R1).